The sequence spans 743 residues: ABC-type transporter claG (743 aa).

N-linked (GlcNAc...) asparagine glycans are attached at residues asparagine 4 and asparagine 30. Residues 124–144 form a helical membrane-spanning segment; it reads SILLDIFLVIVVSWPFPFAWI. Asparagine 159 carries N-linked (GlcNAc...) asparagine glycosylation. The ABC transporter domain occupies 200-439; the sequence is VEFSGISMRP…FQDAGYTFPL (240 aa). 234–241 contributes to the ATP binding site; sequence GPSGSGKS. Transmembrane regions (helical) follow at residues 507-527, 560-580, 611-631, 636-656, and 661-681; these read YPSF…IGLS, GMLL…KTFG, IFLS…PIVS, LIVN…ISAI, and NGPL…GCAP.

This sequence belongs to the ABC transporter superfamily. ABCG family.

The protein localises to the membrane. In terms of biological role, ABC-type transporter; part of the cla gene cluster that produces clavatol and ortho-quinone methide. The clavatol biosynthesis cluster cla and the terrestric acid cluster tra are both involved in the production of peniphenones and penilactones. The polypeptide is ABC-type transporter claG (Penicillium crustosum (Blue mold fungus)).